The sequence spans 218 residues: Hypoxanthine-guanine phosphoribosyltransferase (218 aa).

Lysine 69 contributes to the GMP binding site. Lysine 103 is modified (N6-acetyllysine). Residue lysine 115 forms a Glycyl lysine isopeptide (Lys-Gly) (interchain with G-Cter in SUMO1); alternate linkage. Lysine 115 participates in a covalent cross-link: Glycyl lysine isopeptide (Lys-Gly) (interchain with G-Cter in SUMO2); alternate. GMP-binding positions include 134–142 (EDIIDTGKT), lysine 166, 186–188 (KFV), and aspartate 194. Aspartate 138 functions as the Proton acceptor in the catalytic mechanism. Threonine 142 bears the Phosphothreonine mark. Aspartate 194 is a binding site for Mg(2+).

This sequence belongs to the purine/pyrimidine phosphoribosyltransferase family. In terms of assembly, homotetramer. Mg(2+) is required as a cofactor.

It localises to the cytoplasm. The catalysed reaction is IMP + diphosphate = hypoxanthine + 5-phospho-alpha-D-ribose 1-diphosphate. It carries out the reaction GMP + diphosphate = guanine + 5-phospho-alpha-D-ribose 1-diphosphate. Its pathway is purine metabolism; IMP biosynthesis via salvage pathway; IMP from hypoxanthine: step 1/1. Its function is as follows. Converts guanine to guanosine monophosphate, and hypoxanthine to inosine monophosphate. Transfers the 5-phosphoribosyl group from 5-phosphoribosylpyrophosphate onto the purine. Plays a central role in the generation of purine nucleotides through the purine salvage pathway. This chain is Hypoxanthine-guanine phosphoribosyltransferase (Hprt1), found in Rattus norvegicus (Rat).